We begin with the raw amino-acid sequence, 271 residues long: Glutamate racemase (271 aa).

Substrate-binding positions include Asp10 to Ser11 and Tyr42 to Gly43. Cys73 functions as the Proton donor/acceptor in the catalytic mechanism. A substrate-binding site is contributed by Asn74–Thr75. Cys183 serves as the catalytic Proton donor/acceptor. Thr184 to His185 lines the substrate pocket.

Belongs to the aspartate/glutamate racemases family.

The enzyme catalyses L-glutamate = D-glutamate. Its pathway is cell wall biogenesis; peptidoglycan biosynthesis. In terms of biological role, provides the (R)-glutamate required for cell wall biosynthesis. The sequence is that of Glutamate racemase from Lactococcus lactis subsp. lactis (strain IL1403) (Streptococcus lactis).